The chain runs to 346 residues: Sensor protein kinase GraS (346 aa).

2 consecutive transmembrane segments (helical) span residues 15–35 (MNWI…SLID) and 43–63 (LFYI…LTYF). Positions 126-332 (EFVHDIKTPV…TVRLIFPLQN (207 aa)) constitute a Histidine kinase domain.

In terms of assembly, interacts with GraX.

It is found in the cell membrane. The catalysed reaction is ATP + protein L-histidine = ADP + protein N-phospho-L-histidine.. In terms of biological role, member of the two-component regulatory system GraR/GraS involved in resistance against cationic antimicrobial peptides (CAMPs). Functions as a sensor protein kinase which phosphorylates GraR through the auxiliary protein GraX. In turn, GraR up-regulates many genes such as adhesins, exoproteins, transporters, toxins, and proteins involved in cell wall synthesis. Down-regulates the expression of many genes involved in RNA and amino acid synthesis or glycolysis. The polypeptide is Sensor protein kinase GraS (graS) (Staphylococcus aureus (strain MSSA476)).